A 549-amino-acid chain; its full sequence is Arginine--tRNA ligase (549 aa).

A 'HIGH' region motif is present at residues 132–142 (ANPTGPLHIGH).

Belongs to the class-I aminoacyl-tRNA synthetase family. Monomer.

It localises to the cytoplasm. The enzyme catalyses tRNA(Arg) + L-arginine + ATP = L-arginyl-tRNA(Arg) + AMP + diphosphate. This chain is Arginine--tRNA ligase, found in Paenarthrobacter aurescens (strain TC1).